Consider the following 259-residue polypeptide: Imidazole glycerol phosphate synthase subunit HisF (259 aa).

Catalysis depends on residues aspartate 11 and aspartate 130.

Belongs to the HisA/HisF family. In terms of assembly, heterodimer of HisH and HisF.

The protein resides in the cytoplasm. The catalysed reaction is 5-[(5-phospho-1-deoxy-D-ribulos-1-ylimino)methylamino]-1-(5-phospho-beta-D-ribosyl)imidazole-4-carboxamide + L-glutamine = D-erythro-1-(imidazol-4-yl)glycerol 3-phosphate + 5-amino-1-(5-phospho-beta-D-ribosyl)imidazole-4-carboxamide + L-glutamate + H(+). It functions in the pathway amino-acid biosynthesis; L-histidine biosynthesis; L-histidine from 5-phospho-alpha-D-ribose 1-diphosphate: step 5/9. In terms of biological role, IGPS catalyzes the conversion of PRFAR and glutamine to IGP, AICAR and glutamate. The HisF subunit catalyzes the cyclization activity that produces IGP and AICAR from PRFAR using the ammonia provided by the HisH subunit. The sequence is that of Imidazole glycerol phosphate synthase subunit HisF from Acidovorax ebreus (strain TPSY) (Diaphorobacter sp. (strain TPSY)).